An 85-amino-acid polypeptide reads, in one-letter code: U4-theraphotoxin-Hhn1r (85 aa).

Positions 1–22 are cleaved as a signal peptide; that stretch reads MKVTLIAILTCAAVLVLHTTAA. Residues 23-48 constitute a propeptide that is removed on maturation; the sequence is EELEAESQLMEVGMPDTELAAVDEER. 3 disulfide bridges follow: cysteine 52–cysteine 66, cysteine 56–cysteine 77, and cysteine 71–cysteine 82.

This sequence belongs to the neurotoxin 12 (Hwtx-2) family. 02 (Hwtx-2) subfamily. As to expression, expressed by the venom gland.

It is found in the secreted. Its function is as follows. Postsynaptic neurotoxin. In Cyriopagopus hainanus (Chinese bird spider), this protein is U4-theraphotoxin-Hhn1r.